Consider the following 150-residue polypeptide: N-alpha-acetyltransferase 30 (150 aa).

The region spanning valine 2–asparagine 150 is the N-acetyltransferase domain.

It belongs to the acetyltransferase family. MAK3 subfamily.

It is found in the cytoplasm. The protein localises to the nucleus. The enzyme catalyses N-terminal L-methionyl-L-leucyl-[protein] + acetyl-CoA = N-terminal N(alpha)-acetyl-L-methionyl-L-leucyl-[protein] + CoA + H(+). It carries out the reaction N-terminal L-methionyl-L-isoleucyl-[protein] + acetyl-CoA = N-terminal N(alpha)-acetyl-L-methionyl-L-isoleucyl-[protein] + CoA + H(+). It catalyses the reaction N-terminal L-methionyl-L-phenylalanyl-[protein] + acetyl-CoA = N-terminal N(alpha)-acetyl-L-methionyl-L-phenylalanyl-[protein] + CoA + H(+). The catalysed reaction is N-terminal L-methionyl-L-tryptophyl-[protein] + acetyl-CoA = N-terminal N(alpha)-acetyl-L-methionyl-L-tryptophyl-[protein] + CoA + H(+). The enzyme catalyses N-terminal L-methionyl-L-tyrosyl-[protein] + acetyl-CoA = N-terminal N(alpha)-acetyl-L-methionyl-L-tyrosyl-[protein] + CoA + H(+). Functionally, catalytic component of the NatC N-terminal acetyltransferase. The chain is N-alpha-acetyltransferase 30 (naa30) from Schizosaccharomyces pombe (strain 972 / ATCC 24843) (Fission yeast).